We begin with the raw amino-acid sequence, 740 residues long: Phosphoribosylformylglycinamidine synthase subunit PurL (740 aa).

Residue histidine 55 is part of the active site. Residues tyrosine 58 and lysine 97 each contribute to the ATP site. Residue glutamate 99 participates in Mg(2+) binding. Substrate is bound by residues 100–103 (SHNH) and arginine 122. The active-site Proton acceptor is histidine 101. Aspartate 123 contributes to the Mg(2+) binding site. Position 246 (glutamine 246) interacts with substrate. Residue aspartate 276 coordinates Mg(2+). Residue 320–322 (ESQ) participates in substrate binding. Aspartate 501 and glycine 538 together coordinate ATP. Asparagine 539 provides a ligand contact to Mg(2+). Serine 541 is a substrate binding site.

It belongs to the FGAMS family. In terms of assembly, monomer. Part of the FGAM synthase complex composed of 1 PurL, 1 PurQ and 2 PurS subunits.

It localises to the cytoplasm. It carries out the reaction N(2)-formyl-N(1)-(5-phospho-beta-D-ribosyl)glycinamide + L-glutamine + ATP + H2O = 2-formamido-N(1)-(5-O-phospho-beta-D-ribosyl)acetamidine + L-glutamate + ADP + phosphate + H(+). The protein operates within purine metabolism; IMP biosynthesis via de novo pathway; 5-amino-1-(5-phospho-D-ribosyl)imidazole from N(2)-formyl-N(1)-(5-phospho-D-ribosyl)glycinamide: step 1/2. Functionally, part of the phosphoribosylformylglycinamidine synthase complex involved in the purines biosynthetic pathway. Catalyzes the ATP-dependent conversion of formylglycinamide ribonucleotide (FGAR) and glutamine to yield formylglycinamidine ribonucleotide (FGAM) and glutamate. The FGAM synthase complex is composed of three subunits. PurQ produces an ammonia molecule by converting glutamine to glutamate. PurL transfers the ammonia molecule to FGAR to form FGAM in an ATP-dependent manner. PurS interacts with PurQ and PurL and is thought to assist in the transfer of the ammonia molecule from PurQ to PurL. This Lacticaseibacillus casei (Lactobacillus casei) protein is Phosphoribosylformylglycinamidine synthase subunit PurL.